Reading from the N-terminus, the 256-residue chain is Putative ankyrin repeat protein FPV231 (256 aa).

ANK repeat units follow at residues M1–S20, E24–I53, Y57–L86, H90–I119, and E123–I151.

This chain is Putative ankyrin repeat protein FPV231, found in Vertebrata (FPV).